We begin with the raw amino-acid sequence, 377 residues long: Dihydroorotase, mitochondrial (377 aa).

Zn(2+) contacts are provided by His44, His46, Lys130, His168, and His206. Lys130 carries the N6-carboxylysine modification. A Phosphoserine modification is found at Ser223. Asp280 contacts Zn(2+).

The protein belongs to the metallo-dependent hydrolases superfamily. DHOase family. Class II DHOase subfamily. Zn(2+) is required as a cofactor.

The protein resides in the mitochondrion. It carries out the reaction (S)-dihydroorotate + H2O = N-carbamoyl-L-aspartate + H(+). It functions in the pathway pyrimidine metabolism; UMP biosynthesis via de novo pathway; (S)-dihydroorotate from bicarbonate: step 3/3. This Arabidopsis thaliana (Mouse-ear cress) protein is Dihydroorotase, mitochondrial (PYR4).